A 261-amino-acid chain; its full sequence is CD40 ligand (261 aa).

Residues 1 to 22 (MIETYNQPVPRSAATGPPVSMK) are Cytoplasmic-facing. Residues 23–43 (IFMYLLTVFLITQMIGSALFA) traverse the membrane as a helical; Signal-anchor for type II membrane protein segment. The Extracellular segment spans residues 44–261 (VYLHRRLDKI…GFTSFGLLKL (218 aa)). Positions 122-261 (IAAHVISEAS…GFTSFGLLKL (140 aa)) constitute a THD domain. Residues C178 and C218 are joined by a disulfide bond. N240 carries an N-linked (GlcNAc...) asparagine glycan.

The protein belongs to the tumor necrosis factor family. In terms of assembly, homotrimer. Interacts with CD28. CD40 ligand, soluble form: Exists as either a monomer or a homotrimer. Forms a ternary complex between CD40 and integrins for CD40-CD40LG signaling. In terms of processing, the soluble form derives from the membrane form by proteolytic processing.

The protein localises to the cell membrane. Its subcellular location is the cell surface. It is found in the secreted. In terms of biological role, cytokine that acts as a ligand to CD40/TNFRSF5. Costimulates T-cell proliferation and cytokine production. Its cross-linking on T-cells generates a costimulatory signal which enhances the production of IL4 and IL10 in conjunction with the TCR/CD3 ligation and CD28 costimulation. Induces the activation of NF-kappa-B. Induces the activation of kinases MAPK8 and PAK2 in T-cells. Mediates B-cell proliferation in the absence of co-stimulus as well as IgE production in the presence of IL4. Involved in immunoglobulin class switching. Acts as a ligand for integrins, specifically ITGA5:ITGB1 and ITGAV:ITGB3; both integrins and the CD40 receptor are required for activation of CD40-CD40LG signaling, which have cell-type dependent effects, such as B-cell activation, NF-kappa-B signaling and anti-apoptotic signaling. The sequence is that of CD40 ligand (CD40LG) from Callithrix jacchus (White-tufted-ear marmoset).